The chain runs to 376 residues: Coatomer subunit delta-4 (376 aa).

The segment at leucine 65 to glycine 92 is disordered. Residues threonine 80–glycine 92 are compositionally biased toward gly residues. Residues serine 134 to valine 376 enclose the MHD domain.

Belongs to the adaptor complexes medium subunit family. Delta-COP subfamily. In terms of assembly, oligomeric complex that consists of at least the alpha, beta, beta', gamma, delta, epsilon and zeta subunits.

Its subcellular location is the cytoplasm. The protein resides in the golgi apparatus membrane. It localises to the cytoplasmic vesicle. The protein localises to the COPI-coated vesicle membrane. The coatomer is a cytosolic protein complex that binds to dilysine motifs and reversibly associates with Golgi non-clathrin-coated vesicles, which further mediate biosynthetic protein transport from the ER, via the Golgi up to the trans Golgi network. Coatomer complex is required for budding from Golgi membranes, and is essential for the retrograde Golgi-to-ER transport of dilysine-tagged proteins. The polypeptide is Coatomer subunit delta-4 (Oryza sativa subsp. japonica (Rice)).